Reading from the N-terminus, the 613-residue chain is ADP-ribosylation factor-binding protein GGA2 (613 aa).

The region spanning 33–163 is the VHS domain; the sequence is ATDPSMSEQD…MLKKQGIIKQ (131 aa). The 128-residue stretch at 188–315 folds into the GAT domain; that stretch reads DEEKSKLLTR…GVLLYKQVME (128 aa). Residues 316–483 form a unstructured hinge region; it reads GRVTFGNRVT…VFVPLESVKP (168 aa). 2 disordered regions span residues 389-414 and 435-466; these read GQNC…NPSA and SQKS…SPSS. Residues 399 to 414 are compositionally biased toward polar residues; the sequence is PSSSTLPGGGVQNPSA. Serine 400 bears the Phosphoserine mark. Positions 484–605 constitute a GAE domain; it reads SSLPPLIVYD…SEVGEVKDFP (122 aa).

The protein belongs to the GGA protein family. As to quaternary structure, monomer. Interacts with NECAP1, TSG101, UBC and AFTPH/aftiphilin. Interacts with CNST. Interacts with GGA1 and GGA3. Binds to clathrin and activated ARFs, such as ARF1, ARF5 and ARF6. Binds RABEP1 and RABGEF1. Interacts with the type-I membrane proteins LRP3, M6PR/CD-MPR, IGF2R/CI-MPR and BACE1. Interacts (via N-terminal VHS domain) with SORL1/sorLA and SORT1 (via C-terminal cytosolic domain). Binds the accessory proteins CCDC91, P200, SYNRG, EPN4 and NECAP2. Interacts with ADRA2B. Interacts (via VHS domain) with PIK4B; the interaction is important for PIK4B location at the Golgi apparatus membrane. Post-translationally, ubiquitinated. In terms of tissue distribution, ubiquitously expressed.

The protein localises to the golgi apparatus. The protein resides in the trans-Golgi network membrane. It is found in the endosome membrane. Its subcellular location is the early endosome membrane. In terms of biological role, plays a role in protein sorting and trafficking between the trans-Golgi network (TGN) and endosomes. Mediates the ARF-dependent recruitment of clathrin to the TGN and binds ubiquitinated proteins and membrane cargo molecules with a cytosolic acidic cluster-dileucine (DXXLL) motif. Mediates export of the GPCR receptor ADRA2B to the cell surface. Regulates retrograde transport of phosphorylated form of BACE1 from endosomes to the trans-Golgi network. The sequence is that of ADP-ribosylation factor-binding protein GGA2 (GGA2) from Homo sapiens (Human).